The following is a 274-amino-acid chain: Mitochondrial outer membrane protein porin 1 (274 aa).

Belongs to the eukaryotic mitochondrial porin (TC 1.B.8.1) family. Expressed in shoots and roots. Also expressed in callus, leaves, panicles, sheaths and stems.

The protein localises to the mitochondrion outer membrane. Its function is as follows. Forms a channel through the mitochondrial outer membrane that allows diffusion of small hydrophilic molecules. The channel adopts an open conformation at low or zero membrane potential and a closed conformation at potentials above 30-40 mV. The open state has a weak anion selectivity whereas the closed state is cation-selective. This Oryza sativa subsp. japonica (Rice) protein is Mitochondrial outer membrane protein porin 1 (VDAC1).